The primary structure comprises 207 residues: 8-oxoguanine DNA glycosylase/AP lyase (207 aa).

Residues lysine 128 and aspartate 146 contribute to the active site.

It belongs to the type-2 OGG1 family.

It carries out the reaction 2'-deoxyribonucleotide-(2'-deoxyribose 5'-phosphate)-2'-deoxyribonucleotide-DNA = a 3'-end 2'-deoxyribonucleotide-(2,3-dehydro-2,3-deoxyribose 5'-phosphate)-DNA + a 5'-end 5'-phospho-2'-deoxyribonucleoside-DNA + H(+). Catalyzes the excision of an oxidatively damaged form of guanine (7,8-dihydro-8-oxoguanine = 8-oxoG) from DNA. Also cleaves the DNA backbone at apurinic/apyrimidinic sites (AP sites). The polypeptide is 8-oxoguanine DNA glycosylase/AP lyase (Saccharolobus solfataricus (strain ATCC 35092 / DSM 1617 / JCM 11322 / P2) (Sulfolobus solfataricus)).